The primary structure comprises 118 residues: Large ribosomal subunit protein bL20 (118 aa).

It belongs to the bacterial ribosomal protein bL20 family.

Its function is as follows. Binds directly to 23S ribosomal RNA and is necessary for the in vitro assembly process of the 50S ribosomal subunit. It is not involved in the protein synthesizing functions of that subunit. The sequence is that of Large ribosomal subunit protein bL20 from Thermus thermophilus (strain ATCC BAA-163 / DSM 7039 / HB27).